The sequence spans 395 residues: Elongation factor Tu (395 aa).

The tr-type G domain maps to 10–204; sequence KPHLNIGTIG…TVDNYIKEPI (195 aa). Residues 19–26 form a G1 region; it reads GHVDHGKT. 19 to 26 contributes to the GTP binding site; it reads GHVDHGKT. Threonine 26 is a binding site for Mg(2+). Residues 60–64 form a G2 region; the sequence is GITIN. A G3 region spans residues 81 to 84; that stretch reads DCPG. GTP-binding positions include 81–85 and 136–139; these read DCPGH and NKVD. Residues 136–139 form a G4 region; that stretch reads NKVD. The segment at 174-176 is G5; that stretch reads SAL.

The protein belongs to the TRAFAC class translation factor GTPase superfamily. Classic translation factor GTPase family. EF-Tu/EF-1A subfamily. As to quaternary structure, monomer.

It localises to the cytoplasm. It carries out the reaction GTP + H2O = GDP + phosphate + H(+). Its function is as follows. GTP hydrolase that promotes the GTP-dependent binding of aminoacyl-tRNA to the A-site of ribosomes during protein biosynthesis. The polypeptide is Elongation factor Tu (Karelsulcia muelleri (strain GWSS) (Sulcia muelleri)).